Reading from the N-terminus, the 132-residue chain is Subtelomeric hrmA-associated cluster protein AFUB_079000 (132 aa).

Functionally, part of the subtelomeric hrmA-associated cluster (HAC) containing genes that alter the hyphal surface (such as reduced total chitin or increased beta-glucan exposure) and perturb inter-hyphal interactions within the developing biofilms, resulting in a loss of vertically aligned polarized growing filaments. Consequently, this hypoxia-typic morphotype (called H-MORPH) with altered biofilm architecture leads to increased hypoxia fitness, increased host inflammation, rapid disease progression, and mortality in a murine model of invasive aspergillosis. The chain is Subtelomeric hrmA-associated cluster protein AFUB_079000 from Aspergillus fumigatus (strain CBS 144.89 / FGSC A1163 / CEA10) (Neosartorya fumigata).